A 131-amino-acid chain; its full sequence is Large ribosomal subunit protein bL17 (131 aa).

This sequence belongs to the bacterial ribosomal protein bL17 family. Part of the 50S ribosomal subunit. Contacts protein L32.

The sequence is that of Large ribosomal subunit protein bL17 from Shewanella baltica (strain OS223).